A 464-amino-acid chain; its full sequence is Cysteine--tRNA ligase (464 aa).

Zn(2+) is bound at residue Cys-28. The 'HIGH' region signature appears at 30–40; that stretch reads PTVYDHSHIGH. Zn(2+) contacts are provided by Cys-205, His-230, and Glu-234. The 'KMSKS' region motif lies at 263–267; it reads KMSKS. Lys-266 serves as a coordination point for ATP.

Belongs to the class-I aminoacyl-tRNA synthetase family. The cofactor is Zn(2+).

The protein localises to the cytoplasm. It catalyses the reaction tRNA(Cys) + L-cysteine + ATP = L-cysteinyl-tRNA(Cys) + AMP + diphosphate. This chain is Cysteine--tRNA ligase, found in Ignicoccus hospitalis (strain KIN4/I / DSM 18386 / JCM 14125).